We begin with the raw amino-acid sequence, 735 residues long: Disintegrin and metalloproteinase domain-containing protein 2 (735 aa).

The signal sequence occupies residues 1 to 18 (MWLILLLLSGLSELGGLS). A propeptide spanning residues 19 to 180 (QSQTEGTREK…YKIRSIKPQR (162 aa)) is cleaved from the precursor. The Extracellular portion of the chain corresponds to 19–686 (QSQTEGTREK…ASAYRSKSPR (668 aa)). N-linked (GlcNAc...) asparagine glycosylation is found at Asn128, Asn226, and Asn279. Residues 184 to 381 (HYLEIHIVVE…QSSHCLQNQP (198 aa)) form the Peptidase M12B domain. Cystine bridges form between Cys293-Cys376, Cys335-Cys360, Cys337-Cys342, and Cys449-Cys469. N-linked (GlcNAc...) asparagine glycans are attached at residues Asn359, Asn463, Asn489, Asn569, and Asn585. The Disintegrin domain maps to 389 to 476 (MAVCGNGEVE…EVCEDFFVQN (88 aa)). One can recognise an EGF-like domain in the interval 615–648 (LGYDCNLEKCNHHGVCNNKKNCHCDPTYLPPDCK). Cystine bridges form between Cys619–Cys630, Cys624–Cys636, and Cys638–Cys647. Residues 687–707 (WPFFLIIPFYVVILVLIGMLV) form a helical membrane-spanning segment. Residues 708–735 (KVYSQRMKWRMDDFSSEEQFESESESKD) lie on the Cytoplasmic side of the membrane. The residue at position 729 (Ser729) is a Phosphoserine.

Heterodimer with ADAM1/fertilin subunit alpha. Post-translationally, the signal and the metalloprotease domain are cleaved during the epididymal maturation of the spermatozoa. As to expression, expressed in the testis and testicular sperm (at protein level).

It localises to the membrane. Its function is as follows. Sperm surface membrane protein that may be involved in sperm-egg plasma membrane adhesion and fusion during fertilization. Could have a direct role in sperm-zona binding or migration of sperm from the uterus into the oviduct. Interactions with egg membrane could be mediated via binding between its disintegrin-like domain to one or more integrins receptors on the egg. This is a non catalytic metalloprotease-like protein. This Mus musculus (Mouse) protein is Disintegrin and metalloproteinase domain-containing protein 2.